The following is a 333-amino-acid chain: L-lactate dehydrogenase B chain (333 aa).

NAD(+) is bound by residues glycine 29–lysine 57 and arginine 99. 3 residues coordinate substrate: arginine 106, asparagine 138, and arginine 169. Residue asparagine 138 participates in NAD(+) binding. The active-site Proton acceptor is the histidine 193. Threonine 248 is a substrate binding site.

It belongs to the LDH/MDH superfamily. LDH family. As to quaternary structure, homotetramer.

Its subcellular location is the cytoplasm. The enzyme catalyses (S)-lactate + NAD(+) = pyruvate + NADH + H(+). Its pathway is fermentation; pyruvate fermentation to lactate; (S)-lactate from pyruvate: step 1/1. In terms of biological role, interconverts simultaneously and stereospecifically pyruvate and lactate with concomitant interconversion of NADH and NAD(+). The polypeptide is L-lactate dehydrogenase B chain (LDHB) (Trachemys scripta elegans (Red-eared slider turtle)).